The sequence spans 389 residues: 8-amino-7-oxononanoate synthase (389 aa).

Arg-31 serves as a coordination point for substrate. 109–110 (GY) lines the pyridoxal 5'-phosphate pocket. His-134 lines the substrate pocket. Pyridoxal 5'-phosphate contacts are provided by residues Ser-180, 205-208 (DEAH), and 236-239 (TLSK). An N6-(pyridoxal phosphate)lysine modification is found at Lys-239. Thr-349 contacts substrate.

Belongs to the class-II pyridoxal-phosphate-dependent aminotransferase family. BioF subfamily. In terms of assembly, homodimer. It depends on pyridoxal 5'-phosphate as a cofactor.

It carries out the reaction 6-carboxyhexanoyl-[ACP] + L-alanine + H(+) = (8S)-8-amino-7-oxononanoate + holo-[ACP] + CO2. It functions in the pathway cofactor biosynthesis; biotin biosynthesis. In terms of biological role, catalyzes the decarboxylative condensation of pimeloyl-[acyl-carrier protein] and L-alanine to produce 8-amino-7-oxononanoate (AON), [acyl-carrier protein], and carbon dioxide. The chain is 8-amino-7-oxononanoate synthase from Mycobacterium ulcerans (strain Agy99).